We begin with the raw amino-acid sequence, 211 residues long: Histidine biosynthesis bifunctional protein HisIE (211 aa).

The segment at 1-117 is phosphoribosyl-AMP cyclohydrolase; sequence MSTQTNTKSD…CWLDGNAHPF (117 aa). A phosphoribosyl-ATP pyrophosphohydrolase region spans residues 118–211; the sequence is LNNLAELIAS…LARHQKAQRK (94 aa).

This sequence in the N-terminal section; belongs to the PRA-CH family. It in the C-terminal section; belongs to the PRA-PH family.

It is found in the cytoplasm. The enzyme catalyses 1-(5-phospho-beta-D-ribosyl)-ATP + H2O = 1-(5-phospho-beta-D-ribosyl)-5'-AMP + diphosphate + H(+). The catalysed reaction is 1-(5-phospho-beta-D-ribosyl)-5'-AMP + H2O = 1-(5-phospho-beta-D-ribosyl)-5-[(5-phospho-beta-D-ribosylamino)methylideneamino]imidazole-4-carboxamide. It functions in the pathway amino-acid biosynthesis; L-histidine biosynthesis; L-histidine from 5-phospho-alpha-D-ribose 1-diphosphate: step 2/9. Its pathway is amino-acid biosynthesis; L-histidine biosynthesis; L-histidine from 5-phospho-alpha-D-ribose 1-diphosphate: step 3/9. This is Histidine biosynthesis bifunctional protein HisIE from Shewanella oneidensis (strain ATCC 700550 / JCM 31522 / CIP 106686 / LMG 19005 / NCIMB 14063 / MR-1).